The sequence spans 213 residues: Small ribosomal subunit protein eS1 (213 aa).

This sequence belongs to the eukaryotic ribosomal protein eS1 family.

The sequence is that of Small ribosomal subunit protein eS1 from Desulfurococcus amylolyticus (strain DSM 18924 / JCM 16383 / VKM B-2413 / 1221n) (Desulfurococcus kamchatkensis).